We begin with the raw amino-acid sequence, 120 residues long: Chaperonin GroEL (120 aa).

D23–T27 serves as a coordination point for ATP.

The protein belongs to the chaperonin (HSP60) family. In terms of assembly, forms a cylinder of 14 subunits composed of two heptameric rings stacked back-to-back. Interacts with the co-chaperonin GroES.

It is found in the cytoplasm. The catalysed reaction is ATP + H2O + a folded polypeptide = ADP + phosphate + an unfolded polypeptide.. In terms of biological role, together with its co-chaperonin GroES, plays an essential role in assisting protein folding. The GroEL-GroES system forms a nano-cage that allows encapsulation of the non-native substrate proteins and provides a physical environment optimized to promote and accelerate protein folding. The sequence is that of Chaperonin GroEL from Mycolicibacterium vaccae (Mycobacterium vaccae).